The sequence spans 351 residues: MKIAIINMGNNVINFKTVPSSETIYLFKVISEMGLNVDIISLKNGVYTKSFDEVDVNDYDRLIVVNSSINFFGGKPNLAILSAQKFMAKYKSKIYYLFTDIRLPFSQSWPNVKNRPWAYLYTEEELLIKSPIKVISQGINLDIAKAAHKKVDNVIEFEYFPIEQYKIHMNDFQLSKPTKKTLDVIYGGSFRSGQRESKMVEFLFDTGLNIEFFGNAREKQFKNPKYPWTKAPVFTGKIPMNMVSEKNSQAIAALIIGDKNYNDNFITLRVWETMASDAVMLIDEEFDTKHRIINDARFYVNNRAELIDRVNELKHSDVLRKEMLSIQHDILNKTRAKKAEWQDAFKKAIDL.

As to quaternary structure, monomer.

The catalysed reaction is Transfers a beta-D-glucosyl residue from UDP-alpha-D-glucose to a hydroxymethylcytosine residue in DNA.. The protein operates within genetic information processing; DNA modification. Catalyzes the transfer of glucose from uridine diphosphoglucose to 5-hydroxymethyl cytosine of T4 DNA to yield glucosyl 5-hydroxymethyl cytosine (glc-HMC). This DNA process seems to occur immediately after DNA synthesis since the DNA alpha-glucosyltransferase interacts with the clamp protein gp45. The glc-HMC modification protects the phage genome against its own nucleases and the host restriction endonuclease system. The glc-HMC modification also protects against the host CRISPR-Cas9 defense system. The chain is DNA beta-glucosyltransferase (bgt) from Enterobacteria phage T4 (Bacteriophage T4).